Here is a 162-residue protein sequence, read N- to C-terminus: MPREFKSFGSTEKSLLSKGHGEPSYSEIYAEPENFLEIEVHNPKTHIPNGMDSKGMFTDYEIICRTNLPSFHKRVSKVRRRYSDFEFFRKCLIKEISMLNHPKVMVPHLPGKILLSNRFSNEVIEERRQGLNTWMQSVAGHPLLQSGSKVLVRFIEAEKFVG.

The tract at residues 1-23 (MPREFKSFGSTEKSLLSKGHGEP) is disordered. In terms of domain architecture, PX spans 38–161 (IEVHNPKTHI…VRFIEAEKFV (124 aa)). A 1,2-diacyl-sn-glycero-3-phospho-(1D-myo-inositol-3-phosphate) contacts are provided by arginine 81, serine 83, lysine 112, and arginine 127.

Belongs to the sorting nexin family. Monomer. Interacts with RBD2, YIF1, YIP1 and YIP5.

It is found in the cytoplasm. It localises to the golgi apparatus membrane. Its subcellular location is the prevacuolar compartment membrane. Its function is as follows. Required for retention of late Golgi membrane proteins. Component of the retrieval machinery that functions by direct interaction with the cytosolic tails of certain TGN membrane proteins during the sorting/budding process at the prevacuolar compartment. Binds phosphatidylinositol 3-phosphate (PtdIns(P3)). The polypeptide is Sorting nexin-3 (SNX3) (Saccharomyces cerevisiae (strain ATCC 204508 / S288c) (Baker's yeast)).